Here is a 176-residue protein sequence, read N- to C-terminus: Shikimate kinase (176 aa).

An ATP-binding site is contributed by 14-19; it reads GAGKST. Ser-18 provides a ligand contact to Mg(2+). The substrate site is built by Asp-36, Arg-60, and Gly-83. Residue Arg-121 participates in ATP binding. Arg-140 serves as a coordination point for substrate.

The protein belongs to the shikimate kinase family. Monomer. The cofactor is Mg(2+).

The protein localises to the cytoplasm. The catalysed reaction is shikimate + ATP = 3-phosphoshikimate + ADP + H(+). The protein operates within metabolic intermediate biosynthesis; chorismate biosynthesis; chorismate from D-erythrose 4-phosphate and phosphoenolpyruvate: step 5/7. Catalyzes the specific phosphorylation of the 3-hydroxyl group of shikimic acid using ATP as a cosubstrate. This is Shikimate kinase from Francisella tularensis subsp. tularensis (strain FSC 198).